We begin with the raw amino-acid sequence, 316 residues long: Beta-ketoacyl-[acyl-carrier-protein] synthase III (316 aa).

Catalysis depends on residues C112 and H243. The interval 244–248 is ACP-binding; the sequence is QANLR. N273 is a catalytic residue.

It belongs to the thiolase-like superfamily. FabH family. As to quaternary structure, homodimer.

Its subcellular location is the cytoplasm. It carries out the reaction malonyl-[ACP] + acetyl-CoA + H(+) = 3-oxobutanoyl-[ACP] + CO2 + CoA. The protein operates within lipid metabolism; fatty acid biosynthesis. Its function is as follows. Catalyzes the condensation reaction of fatty acid synthesis by the addition to an acyl acceptor of two carbons from malonyl-ACP. Catalyzes the first condensation reaction which initiates fatty acid synthesis and may therefore play a role in governing the total rate of fatty acid production. Possesses both acetoacetyl-ACP synthase and acetyl transacylase activities. Its substrate specificity determines the biosynthesis of branched-chain and/or straight-chain of fatty acids. This is Beta-ketoacyl-[acyl-carrier-protein] synthase III from Actinobacillus succinogenes (strain ATCC 55618 / DSM 22257 / CCUG 43843 / 130Z).